A 232-amino-acid chain; its full sequence is Orotate phosphoribosyltransferase (232 aa).

5-phospho-alpha-D-ribose 1-diphosphate-binding positions include Arg-107, Lys-108, Lys-111, and 133–141 (EDLTTDGGS). Thr-137 contacts orotate.

It belongs to the purine/pyrimidine phosphoribosyltransferase family. PyrE subfamily. In terms of assembly, homodimer. The cofactor is Mg(2+).

It catalyses the reaction orotidine 5'-phosphate + diphosphate = orotate + 5-phospho-alpha-D-ribose 1-diphosphate. The protein operates within pyrimidine metabolism; UMP biosynthesis via de novo pathway; UMP from orotate: step 1/2. In terms of biological role, catalyzes the transfer of a ribosyl phosphate group from 5-phosphoribose 1-diphosphate to orotate, leading to the formation of orotidine monophosphate (OMP). The sequence is that of Orotate phosphoribosyltransferase from Cereibacter sphaeroides (strain KD131 / KCTC 12085) (Rhodobacter sphaeroides).